Here is a 414-residue protein sequence, read N- to C-terminus: Histidine--tRNA ligase (414 aa).

Belongs to the class-II aminoacyl-tRNA synthetase family. As to quaternary structure, homodimer.

Its subcellular location is the cytoplasm. It carries out the reaction tRNA(His) + L-histidine + ATP = L-histidyl-tRNA(His) + AMP + diphosphate + H(+). The chain is Histidine--tRNA ligase from Pelobacter propionicus (strain DSM 2379 / NBRC 103807 / OttBd1).